A 231-amino-acid chain; its full sequence is Uracil-DNA glycosylase (231 aa).

Residue Asp70 is the Proton acceptor of the active site.

The protein belongs to the uracil-DNA glycosylase (UDG) superfamily. UNG family.

It localises to the cytoplasm. It carries out the reaction Hydrolyzes single-stranded DNA or mismatched double-stranded DNA and polynucleotides, releasing free uracil.. Excises uracil residues from the DNA which can arise as a result of misincorporation of dUMP residues by DNA polymerase or due to deamination of cytosine. The sequence is that of Uracil-DNA glycosylase from Pseudomonas fluorescens (strain Pf0-1).